A 234-amino-acid polypeptide reads, in one-letter code: Accessory gland protein Acp29AB (234 aa).

A signal peptide spans 1–21 (MYASNLLYLLALWNLWDLSGG). N-linked (GlcNAc...) asparagine glycans are attached at residues Asn61 and Asn164. The C-type lectin domain maps to 137–234 (VTCRKMNGHL…SFVCQADQWA (98 aa)). Cystine bridges form between Cys139–Cys228 and Cys207–Cys220.

Main cells of the accessory gland and in seminal fluid.

The protein localises to the secreted. Its function is as follows. Responsible for physiological and behavioral changes in mated female flies. The chain is Accessory gland protein Acp29AB (Acp29AB) from Drosophila melanogaster (Fruit fly).